We begin with the raw amino-acid sequence, 324 residues long: Polyketide biosynthesis acyltransferase homolog BaeD (324 aa).

The active site involves Ser99.

The protein resides in the cytoplasm. The protein operates within antibiotic biosynthesis; bacillaene biosynthesis. Its function is as follows. Probably involved in some intermediate steps for the synthesis of the antibiotic polyketide bacillaene which is involved in secondary metabolism. The polypeptide is Polyketide biosynthesis acyltransferase homolog BaeD (baeD) (Bacillus velezensis (strain DSM 23117 / BGSC 10A6 / LMG 26770 / FZB42) (Bacillus amyloliquefaciens subsp. plantarum)).